Consider the following 1165-residue polypeptide: TBC1 domain family member 1 (1165 aa).

Ser-146 carries the phosphoserine modification. Residues 207 to 234 (FSSDQSRSALQPPGDGERGPRPMRKSFS) form a disordered region. The residue at position 232 (Ser-232) is a Phosphoserine; by PKB/AKT1. At Ser-234 the chain carries Phosphoserine; by AMPK. One can recognise a PID domain in the interval 243-401 (FRKEFQDAGL…LHKLCERIEG (159 aa)). Position 500 is a phosphoserine (Ser-500). Thr-502 carries the phosphothreonine; by PKB/AKT1 modification. A phosphoserine mark is found at Ser-504, Ser-522, Ser-524, Ser-562, Ser-563, Ser-567, Ser-568, and Ser-582. Thr-593 carries the phosphothreonine modification. Ser-611 bears the Phosphoserine mark. At Ser-624 the chain carries Phosphoserine; by PKB/AKT1. The interval 624 to 651 (SVSTETPHERKDFESKADHISDASRTPV) is disordered. Positions 629 to 645 (TPHERKDFESKADHISD) are enriched in basic and acidic residues. 2 positions are modified to phosphoserine: Ser-692 and Ser-938. A Rab-GAP TBC domain is found at 797–991 (GVPRHHRGEI…RVFDMIFLQG (195 aa)). Tyr-949 is subject to Phosphotyrosine. The interval 1146–1165 (QTAELGSQESDPTLPKPSGD) is disordered.

As to quaternary structure, interacts with APPL2 (via BAR domain); interaction is dependent of TBC1D1 phosphorylation at Ser-232; interaction diminishes the phosphorylation of TBC1D1 at Thr-593, resulting in inhibition of SLC2A4/GLUT4 translocation and glucose uptake. In terms of processing, insulin-stimulated phosphorylation by AKT family kinases stimulates SLC2A4/GLUT4 translocation.

The protein resides in the nucleus. In terms of biological role, may act as a GTPase-activating protein for Rab family protein(s). May play a role in the cell cycle and differentiation of various tissues. Involved in the trafficking and translocation of GLUT4-containing vesicles and insulin-stimulated glucose uptake into cells. The chain is TBC1 domain family member 1 (TBC1D1) from Bos taurus (Bovine).